The primary structure comprises 634 residues: MDDDGGGSPGHYGGGGIHLVCEYCGHGSEYAEDDADDGFFTCRQCSAIHTSTQNTATNPFDFPMTPAHLSAHRRPTQPTPTPKPFPAPRGAATGAAAPDFDDLGEPSEPRDFATGANAWGNPEDVAARVRWRYVRGLQVILQRQLEALVERHRVGSLAASLAGTIWLRWVAASKVFDEMWVHKMLAIAASVEEGHSASKDKQSELEGDAQKSQSSYEFLFLRSLRMMLPVYSTLAVCFLACHVARETILPTDICRWAMEGKLPYVAAFTQVDKLLGSSLNDCPLSSRQLFRPTRVIGAWQLEAAAGSIAQKIGLLLPSVNFYLIAQRFLKELSLPIEKILPHACRIYEWAMPAELWLSSNPGRVPSRVCVMAILIVALRVLYGINGQGIWESIAQTENAVGSDPEASAPHSIEPDSNNSEEFDARELLCTLAASYDKINVGHDYSKEVHSYLKYCKDVVFTGMTFSLEEEHLIDIFWDMYKGKEVMLLDENAKLCQEKLRTTNGVNKRCRDGRFADTKCCSTPLGNCALQSIKSKMEENGFCYVSPRKRLVSDGYLLYTRRESSGSLIYVAHADYYILLRPFAKLAEVDVRVLHSSVLKLERRLGWIEERVGRSLNTLQNLHDEASDDERPVSD.

The segment at 19 to 51 (LVCEYCGHGSEYAEDDADDGFFTCRQCSAIHTS) adopts an RRN7-type zinc-finger fold. 4 residues coordinate Zn(2+): C21, C24, C42, and C45. Positions 51 to 80 (STQNTATNPFDFPMTPAHLSAHRRPTQPTP) are B-reader. Positions 54-107 (NTATNPFDFPMTPAHLSAHRRPTQPTPTPKPFPAPRGAATGAAAPDFDDLGEPS) are disordered. Over residues 77–87 (QPTPTPKPFPA) the composition is skewed to pro residues. The tract at residues 81-83 (TPK) is B-linker. Positions 84-281 (PFPAPRGAAT…DKLLGSSLND (198 aa)) are N-terminal cyclin fold. Low complexity predominate over residues 88–98 (PRGAATGAAAP). The segment at 282 to 284 (CPL) is C-terminal cyclin fold.

The protein belongs to the RRN7/TAF1B family.

It localises to the nucleus. Its subcellular location is the nucleolus. Functionally, component of RNA polymerase I core factor complex that acts as a GTF2B/TFIIB-like factor and plays a key role in multiple steps during transcription initiation such as pre-initiation complex (PIC) assembly and postpolymerase recruitment events in polymerase I (Pol I) transcription. Binds rDNA promoters and plays a role in Pol I recruitment. The polypeptide is TATA box-binding protein-associated factor RNA polymerase I subunit B (Oryza sativa subsp. japonica (Rice)).